We begin with the raw amino-acid sequence, 330 residues long: 4-hydroxythreonine-4-phosphate dehydrogenase (330 aa).

Substrate-binding residues include H134 and T135. A divalent metal cation is bound by residues H163, H208, and H263. Residues K271, N280, and R289 each contribute to the substrate site.

This sequence belongs to the PdxA family. In terms of assembly, homodimer. Requires Zn(2+) as cofactor. Mg(2+) serves as cofactor. The cofactor is Co(2+).

Its subcellular location is the cytoplasm. The catalysed reaction is 4-(phosphooxy)-L-threonine + NAD(+) = 3-amino-2-oxopropyl phosphate + CO2 + NADH. It participates in cofactor biosynthesis; pyridoxine 5'-phosphate biosynthesis; pyridoxine 5'-phosphate from D-erythrose 4-phosphate: step 4/5. Catalyzes the NAD(P)-dependent oxidation of 4-(phosphooxy)-L-threonine (HTP) into 2-amino-3-oxo-4-(phosphooxy)butyric acid which spontaneously decarboxylates to form 3-amino-2-oxopropyl phosphate (AHAP). In Methylococcus capsulatus (strain ATCC 33009 / NCIMB 11132 / Bath), this protein is 4-hydroxythreonine-4-phosphate dehydrogenase.